The following is a 164-amino-acid chain: Cell division protein SepF (164 aa).

Positions 21–71 (YQQGQQPAQQQQSPVQAVPTPVPAPQQQAKRAPVTPLHKPSTTTRNAAPAE) are disordered. Over residues 22–49 (QQGQQPAQQQQSPVQAVPTPVPAPQQQA) the composition is skewed to low complexity.

Belongs to the SepF family. In terms of assembly, homodimer. Interacts with FtsZ.

It localises to the cytoplasm. Functionally, cell division protein that is part of the divisome complex and is recruited early to the Z-ring. Probably stimulates Z-ring formation, perhaps through the cross-linking of FtsZ protofilaments. Its function overlaps with FtsA. This is Cell division protein SepF from Clavibacter sepedonicus (Clavibacter michiganensis subsp. sepedonicus).